The sequence spans 386 residues: Protein RecA (386 aa).

Residue 76–83 (GPESSGKT) participates in ATP binding. The segment at 362-386 (FDDEDDDFDASTAPAGTFTEVTTEN) is disordered.

The protein belongs to the RecA family.

It is found in the cytoplasm. Can catalyze the hydrolysis of ATP in the presence of single-stranded DNA, the ATP-dependent uptake of single-stranded DNA by duplex DNA, and the ATP-dependent hybridization of homologous single-stranded DNAs. It interacts with LexA causing its activation and leading to its autocatalytic cleavage. This chain is Protein RecA, found in Corynebacterium efficiens (strain DSM 44549 / YS-314 / AJ 12310 / JCM 11189 / NBRC 100395).